The sequence spans 266 residues: Ribosomal RNA small subunit methyltransferase A (266 aa).

6 residues coordinate S-adenosyl-L-methionine: Asn-12, Leu-14, Gly-39, Glu-61, Asp-87, and Asn-107.

It belongs to the class I-like SAM-binding methyltransferase superfamily. rRNA adenine N(6)-methyltransferase family. RsmA subfamily.

The protein localises to the cytoplasm. It catalyses the reaction adenosine(1518)/adenosine(1519) in 16S rRNA + 4 S-adenosyl-L-methionine = N(6)-dimethyladenosine(1518)/N(6)-dimethyladenosine(1519) in 16S rRNA + 4 S-adenosyl-L-homocysteine + 4 H(+). Specifically dimethylates two adjacent adenosines (A1518 and A1519) in the loop of a conserved hairpin near the 3'-end of 16S rRNA in the 30S particle. May play a critical role in biogenesis of 30S subunits. This Nitratidesulfovibrio vulgaris (strain ATCC 29579 / DSM 644 / CCUG 34227 / NCIMB 8303 / VKM B-1760 / Hildenborough) (Desulfovibrio vulgaris) protein is Ribosomal RNA small subunit methyltransferase A.